The sequence spans 584 residues: Probable pectinesterase/pectinesterase inhibitor (584 aa).

A signal peptide spans 1–22; sequence MAVGKIVISVASMLLVVGVAIG. The segment at 40-191 is pectinesterase inhibitor; the sequence is NSHQKAVESL…KILSSNAIDI (152 aa). Asparagine 91 and asparagine 105 each carry an N-linked (GlcNAc...) asparagine glycan. Positions 246 to 267 are disordered; the sequence is AQAGRPGAPADEGIGEGGGGGG. Residues 272–571 are pectinesterase; sequence THVVAKDGSG…TVANWLTPAN (300 aa). The substrate site is built by threonine 349 and glutamine 379. Residue aspartate 402 is the Proton donor; for pectinesterase activity of the active site. Residue aspartate 423 is the Nucleophile; for pectinesterase activity of the active site. Positions 492 and 494 each coordinate substrate.

The protein in the N-terminal section; belongs to the PMEI family. This sequence in the C-terminal section; belongs to the pectinesterase family. Pollen, and at much lower levels in pistils and petals.

The protein localises to the secreted. It is found in the cell wall. The enzyme catalyses [(1-&gt;4)-alpha-D-galacturonosyl methyl ester](n) + n H2O = [(1-&gt;4)-alpha-D-galacturonosyl](n) + n methanol + n H(+). Its pathway is glycan metabolism; pectin degradation; 2-dehydro-3-deoxy-D-gluconate from pectin: step 1/5. Its function is as follows. Acts in the modification of cell walls via demethylesterification of cell wall pectin. In Brassica napus (Rape), this protein is Probable pectinesterase/pectinesterase inhibitor (BP19).